Reading from the N-terminus, the 319-residue chain is Acetyl-coenzyme A carboxylase carboxyl transferase subunit alpha (319 aa).

The region spanning 35–296 is the CoA carboxyltransferase C-terminal domain; that stretch reads NLDEEVQRLR…KAQLLADLAD (262 aa).

Belongs to the AccA family. In terms of assembly, acetyl-CoA carboxylase is a heterohexamer composed of biotin carboxyl carrier protein (AccB), biotin carboxylase (AccC) and two subunits each of ACCase subunit alpha (AccA) and ACCase subunit beta (AccD).

The protein localises to the cytoplasm. The enzyme catalyses N(6)-carboxybiotinyl-L-lysyl-[protein] + acetyl-CoA = N(6)-biotinyl-L-lysyl-[protein] + malonyl-CoA. The protein operates within lipid metabolism; malonyl-CoA biosynthesis; malonyl-CoA from acetyl-CoA: step 1/1. Component of the acetyl coenzyme A carboxylase (ACC) complex. First, biotin carboxylase catalyzes the carboxylation of biotin on its carrier protein (BCCP) and then the CO(2) group is transferred by the carboxyltransferase to acetyl-CoA to form malonyl-CoA. In Erwinia tasmaniensis (strain DSM 17950 / CFBP 7177 / CIP 109463 / NCPPB 4357 / Et1/99), this protein is Acetyl-coenzyme A carboxylase carboxyl transferase subunit alpha.